Consider the following 145-residue polypeptide: Bacilliredoxin SERP1006 (145 aa).

The protein belongs to the bacilliredoxin family.

This chain is Bacilliredoxin SERP1006, found in Staphylococcus epidermidis (strain ATCC 35984 / DSM 28319 / BCRC 17069 / CCUG 31568 / BM 3577 / RP62A).